A 295-amino-acid chain; its full sequence is Sulfotransferase 1E1 (295 aa).

48–53 (KSGSTW) contributes to the 3'-phosphoadenylyl sulfate binding site. 106–108 (KTH) is a substrate binding site. His108 serves as the catalytic Proton acceptor. 2 residues coordinate 3'-phosphoadenylyl sulfate: Arg130 and Ser138. The residue at position 156 (Ser156) is a Phosphoserine. 3'-phosphoadenylyl sulfate-binding positions include Tyr193, 227 to 232 (TSFQEM), and 257 to 259 (RKG).

This sequence belongs to the sulfotransferase 1 family. Homodimer. As to expression, liver of young mature males and uterus.

The protein resides in the cytoplasm. It is found in the cytosol. It carries out the reaction estrone + 3'-phosphoadenylyl sulfate = estrone 3-sulfate + adenosine 3',5'-bisphosphate + H(+). The enzyme catalyses (24S)-hydroxycholesterol + 3'-phosphoadenylyl sulfate = (24S)-hydroxycholesterol 3-sulfate + adenosine 3',5'-bisphosphate + H(+). The catalysed reaction is 17beta-estradiol + 3'-phosphoadenylyl sulfate = 17beta-estradiol 3-sulfate + adenosine 3',5'-bisphosphate + H(+). It catalyses the reaction 3beta-hydroxyandrost-5-en-17-one + 3'-phosphoadenylyl sulfate = dehydroepiandrosterone 3-sulfate + adenosine 3',5'-bisphosphate + H(+). It carries out the reaction 4-ethylphenol + 3'-phosphoadenylyl sulfate = 4-ethylphenyl sulfate + adenosine 3',5'-bisphosphate + H(+). Inhibited by estradiol. Functionally, sulfotransferase that utilizes 3'-phospho-5'-adenylyl sulfate (PAPS) as sulfonate donor to catalyze the sulfate conjugation of estradiol and estrone. Is a key enzyme in estrogen homeostasis, the sulfation of estrogens leads to their inactivation. Also sulfates dehydroepiandrosterone (DHEA), pregnenolone, (24S)-hydroxycholesterol and xenobiotic compounds like ethinylestradiol, equalenin, diethyl stilbesterol and 1-naphthol at significantly lower efficiency. Does not sulfonate cortisol, testosterone and dopamine. May play a role in gut microbiota-host metabolic interaction. O-sulfonates 4-ethylphenol (4-EP), a dietary tyrosine-derived metabolite produced by gut bacteria. The product 4-EPS crosses the blood-brain barrier and may negatively regulate oligodendrocyte maturation and myelination, affecting the functional connectivity of different brain regions associated with the limbic system. The sequence is that of Sulfotransferase 1E1 from Rattus norvegicus (Rat).